Consider the following 554-residue polypeptide: Membrane protein insertase YidC (554 aa).

The next 5 helical transmembrane spans lie at 7 to 24 (VLWV…DNWQ), 362 to 382 (FVGN…AVFF), 436 to 456 (LPVV…LASV), 475 to 495 (PFFI…SLNP), and 510 to 530 (PIAF…YYVV).

The protein belongs to the OXA1/ALB3/YidC family. Type 1 subfamily. Interacts with the Sec translocase complex via SecD. Specifically interacts with transmembrane segments of nascent integral membrane proteins during membrane integration.

It localises to the cell inner membrane. In terms of biological role, required for the insertion and/or proper folding and/or complex formation of integral membrane proteins into the membrane. Involved in integration of membrane proteins that insert both dependently and independently of the Sec translocase complex, as well as at least some lipoproteins. Aids folding of multispanning membrane proteins. The protein is Membrane protein insertase YidC of Burkholderia ambifaria (strain MC40-6).